The chain runs to 363 residues: Ribosomal RNA large subunit methyltransferase M (363 aa).

Residues serine 194, 227 to 230 (CPGG), aspartate 246, aspartate 266, and aspartate 284 each bind S-adenosyl-L-methionine. The active-site Proton acceptor is the lysine 313.

This sequence belongs to the class I-like SAM-binding methyltransferase superfamily. RNA methyltransferase RlmE family. RlmM subfamily. As to quaternary structure, monomer.

The protein localises to the cytoplasm. It carries out the reaction cytidine(2498) in 23S rRNA + S-adenosyl-L-methionine = 2'-O-methylcytidine(2498) in 23S rRNA + S-adenosyl-L-homocysteine + H(+). Functionally, catalyzes the 2'-O-methylation at nucleotide C2498 in 23S rRNA. This Haemophilus influenzae (strain ATCC 51907 / DSM 11121 / KW20 / Rd) protein is Ribosomal RNA large subunit methyltransferase M.